A 161-amino-acid polypeptide reads, in one-letter code: RNA pyrophosphohydrolase (161 aa).

Residues 7 to 149 (KYRPCVGIML…KKEVYKTVIE (143 aa)) enclose the Nudix hydrolase domain. The Nudix box motif lies at 40-61 (GGIDDGEKLEQAALRELLEEVG).

The protein belongs to the Nudix hydrolase family. RppH subfamily. Requires a divalent metal cation as cofactor.

Its function is as follows. Accelerates the degradation of transcripts by removing pyrophosphate from the 5'-end of triphosphorylated RNA, leading to a more labile monophosphorylated state that can stimulate subsequent ribonuclease cleavage. The protein is RNA pyrophosphohydrolase of Wolbachia sp. subsp. Brugia malayi (strain TRS).